We begin with the raw amino-acid sequence, 163 residues long: Thiol peroxidase (163 aa).

One can recognise a Thioredoxin domain in the interval 16–162 (LQVGDTAHDF…YDAAIAAVKS (147 aa)). The active-site Cysteine sulfenic acid (-SOH) intermediate is the Cys-58. A disulfide bridge connects residues Cys-58 and Cys-92.

This sequence belongs to the peroxiredoxin family. Tpx subfamily. In terms of assembly, homodimer.

It carries out the reaction a hydroperoxide + [thioredoxin]-dithiol = an alcohol + [thioredoxin]-disulfide + H2O. In terms of biological role, thiol-specific peroxidase that catalyzes the reduction of hydrogen peroxide and organic hydroperoxides to water and alcohols, respectively. Plays a role in cell protection against oxidative stress by detoxifying peroxides. This Streptococcus sanguinis protein is Thiol peroxidase.